Here is a 324-residue protein sequence, read N- to C-terminus: MLNTLMTHLINPLAYIVPVLLAVAFLTLIERKVLGYMQLRKGPNVVGPYGLLQPIADGVKLFIKEPVRPSTSSPFLFLAAPVLALTLAMTLWAPMPMPHPVTDLNLGILFILALSSLAVYSILGSGWASNSKYALIGALRAVAQTISYEVSLGLILLSVIIFSGGYTLQTFNTTQESIWLLIPAWPLAAMWYISTLAETNRAPFDLTEGESELVSGFNVEYAGGPFALFFLAEYANILLMNTLSAVLFLGASHIPNMPELTTINLMTKAALLSILFLWVRASYPRFRYDQLMHLVWKNFLPLTLAFVLWHTALPIALAGLPPQL.

A run of 8 helical transmembrane segments spans residues 9–29 (LINP…LTLI), 75–95 (FLFL…WAPM), 106–126 (LGIL…LGSG), 146–166 (ISYE…SGGY), 177–197 (SIWL…STLA), 228–248 (LFFL…AVLF), 259–279 (ELTT…FLWV), and 299–319 (FLPL…ALAG).

This sequence belongs to the complex I subunit 1 family.

The protein resides in the mitochondrion inner membrane. It carries out the reaction a ubiquinone + NADH + 5 H(+)(in) = a ubiquinol + NAD(+) + 4 H(+)(out). Core subunit of the mitochondrial membrane respiratory chain NADH dehydrogenase (Complex I) that is believed to belong to the minimal assembly required for catalysis. Complex I functions in the transfer of electrons from NADH to the respiratory chain. The immediate electron acceptor for the enzyme is believed to be ubiquinone. This chain is NADH-ubiquinone oxidoreductase chain 1 (MT-ND1), found in Carassius auratus (Goldfish).